The sequence spans 538 residues: indole-2-monooxygenase (538 aa).

Residues 22 to 42 form a helical membrane-spanning segment; it reads ALLLAIPFSLLLLPLLLRYLA. Cys481 is a binding site for heme.

This sequence belongs to the cytochrome P450 family. Heme is required as a cofactor.

The protein localises to the membrane. The enzyme catalyses indole + reduced [NADPH--hemoprotein reductase] + O2 = indolin-2-one + oxidized [NADPH--hemoprotein reductase] + H2O + H(+). Its pathway is secondary metabolite biosynthesis; 2,4-dihydroxy-1,4-benzoxazin-3-one biosynthesis; 2,4-dihydroxy-1,4-benzoxazin-3-one from indoleglycerol phosphate: step 2/5. Catalyzes the conversion of indole to indolin-2-one. The chain is indole-2-monooxygenase (CYP71C4) from Zea mays (Maize).